Reading from the N-terminus, the 370-residue chain is Mitochondrial carrier protein SCaMC-3L (370 aa).

Solcar repeat units follow at residues 90–176 (EALW…CKNY), 184–269 (PPFQ…LQCF), and 280–367 (PSGL…MKKT). Helical transmembrane passes span 96–113 (LLSG…TAPL), 151–170 (GNGI…FSVF), 194–207 (SLAV…INPM), 245–263 (YLPN…LAVY), 282–306 (GLVS…LTLV), and 342–361 (GMTP…YVVY).

Belongs to the mitochondrial carrier (TC 2.A.29) family.

It localises to the mitochondrion inner membrane. It carries out the reaction Mg(2+)(out) + phosphate(in) + ATP(out) = Mg(2+)(in) + phosphate(out) + ATP(in). The catalysed reaction is ADP(out) + phosphate(in) + H(+)(out) = ADP(in) + phosphate(out) + H(+)(in). Its function is as follows. Calcium-independent ATP-Mg/Pi exchanger that catalyzes the electroneutral exchange of Mg-ATP or free ADP against an hydrogenphosphate and participates in the net transport of adenine nucleotides across the mitochondria inner membrane. This is Mitochondrial carrier protein SCaMC-3L from Homo sapiens (Human).